The chain runs to 151 residues: Probable cGMP 3',5'-cyclic phosphodiesterase subunit delta (151 aa).

This sequence belongs to the PDE6D/unc-119 family. In terms of assembly, interacts with Pde6.

The protein localises to the nucleus. It is found in the cytoplasm. The polypeptide is Probable cGMP 3',5'-cyclic phosphodiesterase subunit delta (Drosophila persimilis (Fruit fly)).